The primary structure comprises 1077 residues: Ubiquitin-activating enzyme E1 2 (1077 aa).

Positions 16 to 36 (SPMKKRRIDHTESADGSAINA) are disordered. Residues Ala499, Asp525, Arg536, Lys549, and 597 to 598 (DN) contribute to the ATP site. The Glycyl thioester intermediate role is filled by Cys653.

This sequence belongs to the ubiquitin-activating E1 family. As to quaternary structure, monomer. Expressed in leaves, flowers, roots and stems. Detected in germinating seeds, cotyledons, hypocotyls, vascular tissues, anthers, filaments, pollen, style, stigma, sepals, petals, ovary, developing ovules, funiculi and silique walls.

It carries out the reaction ATP + ubiquitin + [E1 ubiquitin-activating enzyme]-L-cysteine = AMP + diphosphate + S-ubiquitinyl-[E1 ubiquitin-activating enzyme]-L-cysteine.. The protein operates within protein modification; protein ubiquitination. Its function is as follows. Activates ubiquitin by first adenylating its C-terminal glycine residue with ATP, and thereafter linking this residue to the side chain of a cysteine residue in E1, yielding a ubiquitin-E1 thioester and free AMP. This Arabidopsis thaliana (Mouse-ear cress) protein is Ubiquitin-activating enzyme E1 2 (UBA2).